A 356-amino-acid chain; its full sequence is MEYRRVKDQESYDVVSQKDIESPGERSLSSTSATSSLSTAGASKGKNSWKLKSIVTLALTLLTSSQAILIVWSKRAGKYEYSVTTANFSVEALKCLLSLIALYRTWNSQGVTEDNRLSTSFDEVSVYPIPAILYMVKNLLQYYIFAYVDAPAYQILKNLNIISTGVLYRIILKKKLSEIQWAAFILLCAGCTTAQLNPSSDHVLQTPIQGWVMAIVMALLSGFAGVYTEAIIKKRPSRNINVQNFWLYIFGMLFNLVAICVQDFDAVMNKGFFHGYSFITVLMILNHALSGIAVSMVMKYADNIVKVYSTSVAMLLTAVVSVFLFGFHLSLAFFLGSTVVSVSVYLHSVGKPQPQK.

Residues 1–24 are compositionally biased toward basic and acidic residues; it reads MEYRRVKDQESYDVVSQKDIESPG. Residues 1-44 form a disordered region; it reads MEYRRVKDQESYDVVSQKDIESPGERSLSSTSATSSLSTAGASK. Topologically, residues 1–52 are cytoplasmic; it reads MEYRRVKDQESYDVVSQKDIESPGERSLSSTSATSSLSTAGASKGKNSWKLK. A compositionally biased stretch (low complexity) spans 27–44; that stretch reads SLSSTSATSSLSTAGASK. The chain crosses the membrane as a helical span at residues 53-73; the sequence is SIVTLALTLLTSSQAILIVWS. At 74–82 the chain is on the lumenal side; it reads KRAGKYEYS. A helical transmembrane segment spans residues 83-103; it reads VTTANFSVEALKCLLSLIALY. Residues 104–125 are Cytoplasmic-facing; it reads RTWNSQGVTEDNRLSTSFDEVS. A helical membrane pass occupies residues 126–146; that stretch reads VYPIPAILYMVKNLLQYYIFA. At 147–149 the chain is on the lumenal side; that stretch reads YVD. The helical transmembrane segment at 150 to 172 threads the bilayer; that stretch reads APAYQILKNLNIISTGVLYRIIL. Residues 173–175 lie on the Cytoplasmic side of the membrane; that stretch reads KKK. Residues 176–196 traverse the membrane as a helical segment; that stretch reads LSEIQWAAFILLCAGCTTAQL. Residues 197-211 are Lumenal-facing; that stretch reads NPSSDHVLQTPIQGW. The helical transmembrane segment at 212–232 threads the bilayer; the sequence is VMAIVMALLSGFAGVYTEAII. The Cytoplasmic portion of the chain corresponds to 233–239; sequence KKRPSRN. Residues 240–260 form a helical membrane-spanning segment; it reads INVQNFWLYIFGMLFNLVAIC. Over 261–277 the chain is Lumenal; it reads VQDFDAVMNKGFFHGYS. The chain crosses the membrane as a helical span at residues 278–298; the sequence is FITVLMILNHALSGIAVSMVM. Residues 299–314 are Cytoplasmic-facing; it reads KYADNIVKVYSTSVAM. A helical transmembrane segment spans residues 315 to 335; that stretch reads LLTAVVSVFLFGFHLSLAFFL. The Lumenal portion of the chain corresponds to 336–356; that stretch reads GSTVVSVSVYLHSVGKPQPQK.

The protein belongs to the nucleotide-sugar transporter family. CMP-Sialate:CMP antiporter (TC 2.A.7.12) subfamily. As to expression, expressed in roots, leaves and stalks.

It localises to the golgi apparatus membrane. Functionally, sugar transporter involved in the transport of CMP-sialic acid from the cytoplasm into the Golgi. May transport important nucleotide sugars such as CMP-Kdo (2-keto-3-deoxy-D-manno-octulosonic acid) in physiological conditions. The polypeptide is CMP-sialic acid transporter 2 (Oryza sativa subsp. japonica (Rice)).